Reading from the N-terminus, the 150-residue chain is UPF0735 ACT domain-containing protein DSY2247 (150 aa).

The 76-residue stretch at T74–Q149 folds into the ACT domain.

It belongs to the UPF0735 family.

In Desulfitobacterium hafniense (strain Y51), this protein is UPF0735 ACT domain-containing protein DSY2247.